A 338-amino-acid polypeptide reads, in one-letter code: Trans-enoyl reductase fsr4 (338 aa).

Residue 65 to 68 coordinates NADP(+); it reads KDWK. 147–153 is a substrate binding site; that stretch reads AAFTAAC. NADP(+)-binding positions include 182–185, 205–208, Tyr227, and 277–278; these read SSAV, AGRA, and II.

This sequence belongs to the zinc-containing alcohol dehydrogenase family.

Functionally, trans-enoyl reductase; part of the gene cluster that mediates the biosynthesis of fusarubins, highly pigmented naphthoquinones responsible for the coloration of the fruiting bodies. The non-reducing polyketide synthase FSR1 is responsible for the condensation of seven acetyl-CoA units to yield a haptaketide. After rings A and B are formed by aldol-type cyclization, the PKS-derived product is released as 6-O-demethylfusarubinaldehyde. Then, two hydroxyl groups at C-5 and C-10 are incorporated by FSR3, and simultaneously hydroxyl groups at C-6 and C-8 are methylated by FSR2. The aldehyde is, on the one hand, reduced by FSR3 to 8-O-methylfusarubin alcohol, which equilibrates mainly with 8-O-methylfusarubin and only small amounts of 8-O-methylnectriafurone. On the other hand, the aldehyde can be oxidized to form 8-O-methylfusarubinic acid, a reaction driven by FSR3 equilibrating with 8-O-methylfusarubinlactone, finally resulting in 8-O-methylanhydrofusarubinlactol after a further reduction step and loss of water. 8-O-Methylfusarubinic acid can also undergo decarboxylation, resulting in 8-O-methyl-13-hydroxynorjavanicin after another hydroxylation step at C-13. Both steps are most likely also accomplished by FSR3. No enzymatic function has been determined so far for either FSR4 and FSR5. Their deletion does not alter the product spectrum, but the possibility that they catalyze specific enzymatic steps during perithecium development cannot be ruled out. FSR4 might possess a regulatory function in the biosynthesis of fusarubins. This chain is Trans-enoyl reductase fsr4, found in Gibberella fujikuroi (strain CBS 195.34 / IMI 58289 / NRRL A-6831) (Bakanae and foot rot disease fungus).